Reading from the N-terminus, the 69-residue chain is Protein transport protein Sec61 subunit gamma (69 aa).

Over 1–40 (MDILEETAAPLKDFAKNSIRLFKKCTKPDAQEFQKIALAT) the chain is Cytoplasmic. The chain crosses the membrane as a helical span at residues 41–61 (LIGFAIMGFIGFFVKLIHIPI). Topologically, residues 62 to 69 (NNILVGGV) are extracellular.

The protein belongs to the SecE/SEC61-gamma family. As to quaternary structure, heterotrimeric complex composed of SEC61-alpha, SEC61-beta and SEC61-gamma.

Its subcellular location is the endoplasmic reticulum membrane. Its function is as follows. Necessary for protein translocation in the endoplasmic reticulum. The polypeptide is Protein transport protein Sec61 subunit gamma (sec61g) (Dictyostelium discoideum (Social amoeba)).